We begin with the raw amino-acid sequence, 34 residues long: Photosystem II reaction center protein M (34 aa).

A helical transmembrane segment spans residues 5-25; that stretch reads ILAFIATALFILVPTAFLLII.

This sequence belongs to the PsbM family. PSII is composed of 1 copy each of membrane proteins PsbA, PsbB, PsbC, PsbD, PsbE, PsbF, PsbH, PsbI, PsbJ, PsbK, PsbL, PsbM, PsbT, PsbX, PsbY, PsbZ, Psb30/Ycf12, at least 3 peripheral proteins of the oxygen-evolving complex and a large number of cofactors. It forms dimeric complexes.

It is found in the plastid. The protein localises to the chloroplast thylakoid membrane. Its function is as follows. One of the components of the core complex of photosystem II (PSII). PSII is a light-driven water:plastoquinone oxidoreductase that uses light energy to abstract electrons from H(2)O, generating O(2) and a proton gradient subsequently used for ATP formation. It consists of a core antenna complex that captures photons, and an electron transfer chain that converts photonic excitation into a charge separation. This subunit is found at the monomer-monomer interface. In Cucumis sativus (Cucumber), this protein is Photosystem II reaction center protein M.